The chain runs to 157 residues: Cell cycle control protein 50C (157 aa).

The Cytoplasmic portion of the chain corresponds to 1 to 34; that stretch reads MEERAQHCLSRLLDNSALKQQELPIHRLYFTARR. The chain crosses the membrane as a helical span at residues 35–55; it reads VLFVFFATGIFCLCMGIILIL. Residues 56–157 are Extracellular-facing; that stretch reads SARSTQEIEI…LFLNQVDFSV (102 aa). N-linked (GlcNAc...) asparagine glycosylation is present at Asn-66.

This sequence belongs to the CDC50/LEM3 family.

The protein resides in the membrane. In Pan troglodytes (Chimpanzee), this protein is Cell cycle control protein 50C (TMEM30C).